A 197-amino-acid polypeptide reads, in one-letter code: Holliday junction branch migration complex subunit RuvA (197 aa).

Residues Met-1 to Leu-64 form a domain I region. A domain II region spans residues Thr-65–Gly-143. The flexible linker stretch occupies residues Lys-144–Leu-152. The segment at Leu-152–Ile-197 is domain III.

It belongs to the RuvA family. In terms of assembly, homotetramer. Forms an RuvA(8)-RuvB(12)-Holliday junction (HJ) complex. HJ DNA is sandwiched between 2 RuvA tetramers; dsDNA enters through RuvA and exits via RuvB. An RuvB hexamer assembles on each DNA strand where it exits the tetramer. Each RuvB hexamer is contacted by two RuvA subunits (via domain III) on 2 adjacent RuvB subunits; this complex drives branch migration. In the full resolvosome a probable DNA-RuvA(4)-RuvB(12)-RuvC(2) complex forms which resolves the HJ.

Its subcellular location is the cytoplasm. Functionally, the RuvA-RuvB-RuvC complex processes Holliday junction (HJ) DNA during genetic recombination and DNA repair, while the RuvA-RuvB complex plays an important role in the rescue of blocked DNA replication forks via replication fork reversal (RFR). RuvA specifically binds to HJ cruciform DNA, conferring on it an open structure. The RuvB hexamer acts as an ATP-dependent pump, pulling dsDNA into and through the RuvAB complex. HJ branch migration allows RuvC to scan DNA until it finds its consensus sequence, where it cleaves and resolves the cruciform DNA. The chain is Holliday junction branch migration complex subunit RuvA from Caldicellulosiruptor bescii (strain ATCC BAA-1888 / DSM 6725 / KCTC 15123 / Z-1320) (Anaerocellum thermophilum).